The primary structure comprises 210 residues: Quaternary-amine-specific corrinoid protein (210 aa).

One can recognise a B12-binding N-terminal domain in the interval 1-90 (MADWKNLTQA…VLGSGDTAVA (90 aa)). A B12-binding domain is found at 90 to 210 (AGTILIGTAH…GVKICQAWVG (121 aa)). His103 contacts methylcob(III)alamin.

Belongs to the methylamine corrinoid protein family. In terms of assembly, the proline betaine:THF methyl transfer system is composed of two methyltransferases, MtpB and MtqA, and the corrinoid protein MtqC. The L-carnitine:THF methyl transfer system is composed of two methyltransferases, MtcB and MtqA, and the corrinoid protein MtqC.

Its function is as follows. Involved in the degradation of the quaternary amines L-proline betaine and L-carnitine. Component of a corrinoid-dependent methyltransferase system that transfers a methyl group from L-proline betaine or L-carnitine to tetrahydrofolate (THF), forming methyl-THF, a key intermediate in the Wood-Ljungdahl acetogenesis pathway. Acts as a methyl group carrier between MtpB or MtcB, and MtqA. A methyl group from L-proline betaine or L-carnitine is first transferred to the corrinoid prosthetic group of MtqC by MtpB or MtcB, respectively, and then transferred from MtqC to THF by MtqA. The sequence is that of Quaternary-amine-specific corrinoid protein from Eubacterium limosum.